A 474-amino-acid polypeptide reads, in one-letter code: Glutamate--tRNA ligase (474 aa).

A 'HIGH' region motif is present at residues 10-20 (PSPTGYLHIGG). Positions 107, 109, 134, and 136 each coordinate Zn(2+). The 'KMSKS' region motif lies at 244–248 (RLSKR). Lysine 247 serves as a coordination point for ATP.

Belongs to the class-I aminoacyl-tRNA synthetase family. Glutamate--tRNA ligase type 1 subfamily. As to quaternary structure, monomer. The cofactor is Zn(2+).

The protein resides in the cytoplasm. It carries out the reaction tRNA(Glu) + L-glutamate + ATP = L-glutamyl-tRNA(Glu) + AMP + diphosphate. Its function is as follows. Catalyzes the attachment of glutamate to tRNA(Glu) in a two-step reaction: glutamate is first activated by ATP to form Glu-AMP and then transferred to the acceptor end of tRNA(Glu). The sequence is that of Glutamate--tRNA ligase from Anaeromyxobacter sp. (strain K).